The primary structure comprises 206 residues: Holliday junction branch migration complex subunit RuvA (206 aa).

The tract at residues 1 to 68 (MITFVRGMLA…EDAMQLFGFL (68 aa)) is domain I. The interval 69–147 (EPGERELFGQ…KWREESGLSA (79 aa)) is domain II. The interval 147–151 (AMGAR) is flexible linker. A domain III region spans residues 152 to 206 (ASSRVYEEVELALLALGFAPGEVVRALDAVAPAMAGEEQTEAWLRAAIAWLSEQG).

The protein belongs to the RuvA family. In terms of assembly, homotetramer. Forms an RuvA(8)-RuvB(12)-Holliday junction (HJ) complex. HJ DNA is sandwiched between 2 RuvA tetramers; dsDNA enters through RuvA and exits via RuvB. An RuvB hexamer assembles on each DNA strand where it exits the tetramer. Each RuvB hexamer is contacted by two RuvA subunits (via domain III) on 2 adjacent RuvB subunits; this complex drives branch migration. In the full resolvosome a probable DNA-RuvA(4)-RuvB(12)-RuvC(2) complex forms which resolves the HJ.

The protein localises to the cytoplasm. The RuvA-RuvB-RuvC complex processes Holliday junction (HJ) DNA during genetic recombination and DNA repair, while the RuvA-RuvB complex plays an important role in the rescue of blocked DNA replication forks via replication fork reversal (RFR). RuvA specifically binds to HJ cruciform DNA, conferring on it an open structure. The RuvB hexamer acts as an ATP-dependent pump, pulling dsDNA into and through the RuvAB complex. HJ branch migration allows RuvC to scan DNA until it finds its consensus sequence, where it cleaves and resolves the cruciform DNA. The polypeptide is Holliday junction branch migration complex subunit RuvA (Gloeobacter violaceus (strain ATCC 29082 / PCC 7421)).